The primary structure comprises 373 residues: MSSIKFHEKSLKEVTRWIQANEDINTETSLSSSSDSSTTIPVIDHLPARIPYATDLKRNPCHFQKCLISRLATTKMLSHAVDGGDIEVMGMLVGYTSNDMIVVKDCYSLPVQGTETRVNAHMESYEYMVQYLDAFVTKEDKIVGWYHSHPGYGCWLSNIDIQTQSLNQNYQDPYLAIVVDPKKSLSGNTLDIGAFRTLPSKDNNEHVDYYPLNIQLYQNSLDVNISKLKLKFKVDPAIQNNPNEPELMKELHECVENWFHAKKVMKSTVGFNAIGSTVVNETEIGNEDFTHERSNSISSTSSLTTRHTTDVEMDDQESAQSSLDIPANVIPGMQFQEAEIKHEYELKKKKLLLLKVKQYQKLRTYRQLFNASE.

The MPN domain maps to 66–201 (CLISRLATTK…IGAFRTLPSK (136 aa)). Residues histidine 147, histidine 149, and aspartate 160 each contribute to the Zn(2+) site. The short motif at 147–160 (HSHPGYGCWLSNID) is the JAMM motif element. Residues 289–325 (FTHERSNSISSTSSLTTRHTTDVEMDDQESAQSSLDI) form a disordered region. Low complexity predominate over residues 295–306 (NSISSTSSLTTR).

The protein belongs to the peptidase M67A family. CSN5 subfamily. Component of the COP9 signalosome (CSN) complex.

Its subcellular location is the cytoplasm. It localises to the nucleus. Its function is as follows. Catalytic Component of the COP9 signalosome (CSN) complex that acts as an regulator of the ubiquitin (Ubl) conjugation pathway by mediating the deneddylation of the cullin subunit of SCF-type E3 ubiquitin-protein ligase complexes. The CNS complex is involved in the regulation of the mating pheromone response. This chain is COP9 signalosome complex subunit 5 (RRI1), found in Kluyveromyces lactis (strain ATCC 8585 / CBS 2359 / DSM 70799 / NBRC 1267 / NRRL Y-1140 / WM37) (Yeast).